A 794-amino-acid polypeptide reads, in one-letter code: EVI5-like protein (794 aa).

Polar residues predominate over residues 1–30; that stretch reads MASPTLSPDSSSQEALSAPTCSPTSDSENL. Disordered stretches follow at residues 1-36 and 49-75; these read MASP…DELE and EADS…SSSA. The span at 55–75 shows a compositional bias: low complexity; sequence MRSMNGSRRNSGSSLVSSSSA. The Rab-GAP TBC domain occupies 115-300; it reads GIPHHFRAIV…RVFDIFMYEG (186 aa). 2 coiled-coil regions span residues 358–449 and 569–709; these read KKMK…QQEN and EAQA…LKGP. Serine 685 carries the phosphoserine modification. The interval 766 to 794 is disordered; sequence LERPAKDSEGSSDSDADELAAPYSQGLDN.

In terms of assembly, may interact with RAB10.

Functions as a GTPase-activating protein (GAP) with a broad specificity. The protein is EVI5-like protein (EVI5L) of Homo sapiens (Human).